Consider the following 1214-residue polypeptide: ATP-dependent helicase/nuclease subunit A (1214 aa).

The UvrD-like helicase ATP-binding domain maps to 27–483 (HKRTAQQIEA…ILLKENFRSQ (457 aa)). 48–55 (ASAGSGKT) contacts ATP. The region spanning 512-800 (QLVAGSEAQK…NLMTIHKSKG (289 aa)) is the UvrD-like helicase C-terminal domain.

This sequence belongs to the helicase family. AddA subfamily. Heterodimer of AddA and AddB/RexB. Requires Mg(2+) as cofactor.

It carries out the reaction Couples ATP hydrolysis with the unwinding of duplex DNA by translocating in the 3'-5' direction.. It catalyses the reaction ATP + H2O = ADP + phosphate + H(+). Functionally, the heterodimer acts as both an ATP-dependent DNA helicase and an ATP-dependent, dual-direction single-stranded exonuclease. Recognizes the chi site generating a DNA molecule suitable for the initiation of homologous recombination. The AddA nuclease domain is required for chi fragment generation; this subunit has the helicase and 3' -&gt; 5' nuclease activities. This is ATP-dependent helicase/nuclease subunit A from Streptococcus equi subsp. zooepidemicus (strain MGCS10565).